A 309-amino-acid polypeptide reads, in one-letter code: DnaJ homolog subfamily B member 7 (309 aa).

A J domain is found at 3–69 (DYYEVLGLQR…EKRDIYDKYG (67 aa)). Positions 282–309 (FSAGVKEGGKRKKKKRKEVQKKSTKRNC) are disordered. Basic residues predominate over residues 290–309 (GKRKKKKRKEVQKKSTKRNC).

Probably acts as a co-chaperone. This is DnaJ homolog subfamily B member 7 (DNAJB7) from Homo sapiens (Human).